Here is a 102-residue protein sequence, read N- to C-terminus: Large ribosomal subunit protein bL21 (102 aa).

Belongs to the bacterial ribosomal protein bL21 family. As to quaternary structure, part of the 50S ribosomal subunit. Contacts protein L20.

Functionally, this protein binds to 23S rRNA in the presence of protein L20. The protein is Large ribosomal subunit protein bL21 of Bacillus velezensis (strain DSM 23117 / BGSC 10A6 / LMG 26770 / FZB42) (Bacillus amyloliquefaciens subsp. plantarum).